Consider the following 508-residue polypeptide: Histidine ammonia-lyase (508 aa).

Positions 143–145 form a cross-link, 5-imidazolinone (Ala-Gly); that stretch reads ASG. S144 carries the 2,3-didehydroalanine (Ser) modification.

It belongs to the PAL/histidase family. Post-translationally, contains an active site 4-methylidene-imidazol-5-one (MIO), which is formed autocatalytically by cyclization and dehydration of residues Ala-Ser-Gly.

Its subcellular location is the cytoplasm. It carries out the reaction L-histidine = trans-urocanate + NH4(+). It participates in amino-acid degradation; L-histidine degradation into L-glutamate; N-formimidoyl-L-glutamate from L-histidine: step 1/3. This Anaeromyxobacter dehalogenans (strain 2CP-C) protein is Histidine ammonia-lyase.